We begin with the raw amino-acid sequence, 248 residues long: NADP-dependent 3-hydroxy acid dehydrogenase YdfG (248 aa).

NADP(+) is bound by residues 7-12 (GATAGF), 32-33 (RR), 54-55 (DV), and asparagine 81. Residue serine 134 participates in substrate binding. NADP(+) contacts are provided by residues tyrosine 147, lysine 151, and 177–185 (PGLVGGTEF). Tyrosine 147 serves as the catalytic Proton acceptor.

Belongs to the short-chain dehydrogenases/reductases (SDR) family. In terms of assembly, homotetramer.

The catalysed reaction is 3-hydroxypropanoate + NADP(+) = 3-oxopropanoate + NADPH + H(+). It catalyses the reaction L-allo-threonine + NADP(+) = aminoacetone + CO2 + NADPH. Its function is as follows. NADP-dependent dehydrogenase with broad substrate specificity acting on 3-hydroxy acids. Catalyzes the NADP-dependent oxidation of L-allo-threonine to L-2-amino-3-keto-butyrate, which is spontaneously decarboxylated into aminoacetone. Also acts on D-threonine, L-serine, D-serine, D-3-hydroxyisobutyrate, L-3-hydroxyisobutyrate, D-glycerate and L-glycerate. Able to catalyze the reduction of the malonic semialdehyde to 3-hydroxypropionic acid. YdfG is apparently supplementing RutE, the presumed malonic semialdehyde reductase involved in pyrimidine degradation since both are able to detoxify malonic semialdehyde. The sequence is that of NADP-dependent 3-hydroxy acid dehydrogenase YdfG from Escherichia coli O157:H7.